Reading from the N-terminus, the 430-residue chain is Phosphoribosylamine--glycine ligase (430 aa).

Residues 109–316 (KDFMARHGIP…LLDLIEAALN (208 aa)) form the ATP-grasp domain. 135-196 (VRQQGAPIVI…EEYLDGEEAS (62 aa)) is an ATP binding site. The Mg(2+) site is built by Glu286 and Asn288.

It belongs to the GARS family. Requires Mg(2+) as cofactor. It depends on Mn(2+) as a cofactor.

It carries out the reaction 5-phospho-beta-D-ribosylamine + glycine + ATP = N(1)-(5-phospho-beta-D-ribosyl)glycinamide + ADP + phosphate + H(+). It participates in purine metabolism; IMP biosynthesis via de novo pathway; N(1)-(5-phospho-D-ribosyl)glycinamide from 5-phospho-alpha-D-ribose 1-diphosphate: step 2/2. This Xylella fastidiosa (strain Temecula1 / ATCC 700964) protein is Phosphoribosylamine--glycine ligase.